The chain runs to 81 residues: Photosystem I iron-sulfur center (81 aa).

4Fe-4S ferredoxin-type domains lie at 2-31 (SHSVKIYDTCIGCTQCVRACPTDVLEMIPW) and 39-68 (IASAPRTEDCVGCKRCESACPTDFLSVRVY). Positions 11, 14, 17, 21, 48, 51, 54, and 58 each coordinate [4Fe-4S] cluster.

As to quaternary structure, the eukaryotic PSI reaction center is composed of at least 11 subunits. [4Fe-4S] cluster is required as a cofactor.

It localises to the plastid. It is found in the chloroplast thylakoid membrane. It carries out the reaction reduced [plastocyanin] + hnu + oxidized [2Fe-2S]-[ferredoxin] = oxidized [plastocyanin] + reduced [2Fe-2S]-[ferredoxin]. In terms of biological role, apoprotein for the two 4Fe-4S centers FA and FB of photosystem I (PSI); essential for photochemical activity. FB is the terminal electron acceptor of PSI, donating electrons to ferredoxin. The C-terminus interacts with PsaA/B/D and helps assemble the protein into the PSI complex. Required for binding of PsaD and PsaE to PSI. PSI is a plastocyanin-ferredoxin oxidoreductase, converting photonic excitation into a charge separation, which transfers an electron from the donor P700 chlorophyll pair to the spectroscopically characterized acceptors A0, A1, FX, FA and FB in turn. The chain is Photosystem I iron-sulfur center from Triticum aestivum (Wheat).